The following is a 47-amino-acid chain: PhoP/PhoQ regulator MgrB (47 aa).

A helical transmembrane segment spans residues 6–26; it reads WVILIIVALVCLLLWAQVFNI.

It belongs to the MgrB family. As to quaternary structure, may form homooligomers. Probably interacts with the periplasmic domain of PhoQ.

It localises to the cell inner membrane. Functionally, phoP-regulated transcription is redox-sensitive, being activated when the periplasm becomes more reducing. MgrB acts between DsbA/DsbB and PhoP/PhoQ in this pathway. Represses PhoP/PhoQ signaling, possibly by binding to the periplasmic domain of PhoQ, altering its activity and that of downstream effector PhoP. In Citrobacter koseri (strain ATCC BAA-895 / CDC 4225-83 / SGSC4696), this protein is PhoP/PhoQ regulator MgrB.